We begin with the raw amino-acid sequence, 356 residues long: MPEFVRVAINESLWEFPDIYEFVRFLGGGSFGQVAKVRLRGTENYFAMKRLMRPFEREEDAKGTYREIRLLKHMNHRNVISLLNVFHPPAHNMMEFQQVYLVTHLMDADLHRYSRSKRMSDQEIRIILYQILRGLKYIHSAGVVHRDLKPCNIAVNGNSEVRILDFGLSRMCADKMTDHVGTMWYLAPEIIFLRGQYTKAIDVWSVGCILAELITDRVLFRGENYVSQIRCLINIMGTPTREFITGISMERSRNYLEGYPLRQRCDFHHLFMGYDVQAIDLMEKMLEMVPEKRITAAEAMLHPYLRDLIEPHHHAEDTAPVYDQNFENMVLPVKCWKELVSHEIRNFRPDQLDLHF.

The Protein kinase domain occupies 20 to 305; it reads YEFVRFLGGG…AAEAMLHPYL (286 aa). Residues 26-34 and Lys-49 each bind ATP; that span reads LGGGSFGQV. Asp-147 (proton acceptor) is an active-site residue. Position 177 is a phosphothreonine (Thr-177).

The protein belongs to the protein kinase superfamily. CMGC Ser/Thr protein kinase family. MAP kinase subfamily. The cofactor is Mg(2+). Post-translationally, the phosphorylation on Thr-177 activates the enzyme. A conserved Tyr, which must also be phosphorylated to activate the enzyme in closely related sequences, is replaced by His-179 in this sequence.

The catalysed reaction is L-seryl-[protein] + ATP = O-phospho-L-seryl-[protein] + ADP + H(+). It carries out the reaction L-threonyl-[protein] + ATP = O-phospho-L-threonyl-[protein] + ADP + H(+). Functionally, kinase involved in a signal transduction pathway. The polypeptide is Putative mitogen-activated protein kinase 14C (p38c) (Drosophila melanogaster (Fruit fly)).